Consider the following 455-residue polypeptide: Nuclear distribution protein nudF (455 aa).

The LisH domain maps to 9–41; it reads QAEELHKSMIAYLVASDLPDTAAALRREVNLSE. Residues 61 to 88 are a coiled coil; that stretch reads TSIARLQKKIMDLESRNATLQSELDNST. WD repeat units follow at residues 113–154, 156–196, 200–239, 242–281, 287–347, 349–388, 392–438, and 440–455; these read SHRD…RTLK, HTRA…KNIR, GHDH…CVKT, GHTD…NIEH, GHEN…LMTL, GHDS…KCVK, AHES…IQMR, and VVAT…IFAG. Positions 408–431 are disordered; that stretch reads KNVPGGDGAAEGEGNDKNGAGSEN.

It belongs to the WD repeat LIS1/nudF family. Self-associates. Interacts with nudE and dynein.

It is found in the cytoplasm. It localises to the cytoskeleton. Its subcellular location is the spindle pole. Positively regulates the activity of the minus-end directed microtubule motor protein dynein. May enhance dynein-mediated microtubule sliding by targeting dynein to the microtubule plus end. Required for nuclear migration during vegetative growth as well as development. Required for retrograde early endosome (EE) transport from the hyphal tip. Required for localization of dynein to the mitotic spindle poles. Recruits additional proteins to the dynein complex at SPBs. This is Nuclear distribution protein nudF from Aspergillus flavus (strain ATCC 200026 / FGSC A1120 / IAM 13836 / NRRL 3357 / JCM 12722 / SRRC 167).